The sequence spans 394 residues: MRNWCLCQICTCGSDYRPYEIVKQPRHIPEEYKPKQGKIDLGTTYKRDFNPYKVQPLIKVRPVERQQVKKGKLDTVPTYKDDYRSWDIQKCELCKPEQAYHPPDVKFGNSTTFQDDYVPQEIKPRQSFKPCSVVKCSVGPFNGDTSHRRDYVPHQLEVKFARPKEIYKPTDQPFEDLTTHRNDFQGLAGETAKICRPAYTRVTQNIQFKGSTEFRDSFQPWEIPPPKVKKVAEYVPPSGSMQLNSTSHLDYVPYQASRVVAIRPVSHRRQSNFPFQGKSTTKEDFPAWEICRQGLIKQQQQIPNPSGKFEGLSTFRSHFVPHELIPTESCKPLNEALKSSVPLDDVTMYSIQFTPKKQEICPASYPSPPGYIFENTNSQGHKFFRKIIPAVKAF.

6 mn regions span residues 110–122 (STTF…PQEI), 144–158 (DTSH…QLEV), 244–256 (NSTS…PYQA), 278–292 (KSTT…EICR), 312–324 (LSTF…PHEL), and 346–360 (VTMY…KQEI).

It belongs to the FAM154 family.

This is Stabilizer of axonemal microtubules 2 (Saxo2) from Mus musculus (Mouse).